Consider the following 448-residue polypeptide: Probable D-serine dehydratase (448 aa).

N6-(pyridoxal phosphate)lysine is present on Lys-119.

The protein belongs to the serine/threonine dehydratase family. DsdA subfamily. The cofactor is pyridoxal 5'-phosphate.

The catalysed reaction is D-serine = pyruvate + NH4(+). This chain is Probable D-serine dehydratase, found in Pseudomonas aeruginosa (strain ATCC 15692 / DSM 22644 / CIP 104116 / JCM 14847 / LMG 12228 / 1C / PRS 101 / PAO1).